We begin with the raw amino-acid sequence, 184 residues long: Gremlin-1 (184 aa).

The N-terminal stretch at 1–24 (MNRTAYTVGALLLLLGTLLPTAEG) is a signal peptide. The segment at 23-77 (EGKKKGSQGAIPPPDKAQHNDSEQTQSPPQPGSRTRGRGQGRGTAMPGEEVLESS) is disordered. Asn-42 is a glycosylation site (N-linked (GlcNAc...) asparagine). 4 disulfide bridges follow: Cys-94/Cys-144, Cys-108/Cys-158, Cys-118/Cys-176, and Cys-122/Cys-178. Positions 94 to 184 (CKTQPLKQTI…QCRCISIDLD (91 aa)) constitute a CTCK domain.

This sequence belongs to the DAN family. Homodimer; can also form homooligomers. Interacts with BMP2; can form higher oligomers with BMP2. Interacts with SLIT1 and SLIT2 in a glycosylation-dependent manner. As to expression, highly expressed in spleen and to a lesser extent in lung, skeletal muscle and kidney. Expressed only in non-transformed cells or primary fibroblasts in culture but not in established transformed or tumor derived cell lines. Broadly expressed in limb bud mesenchyme but restricted to the distal limb bud mesenchyme and concentrated posteriorly. Expressed in ovary especially in granulosa cells of follicles of type 4.

It is found in the secreted. Its function is as follows. Cytokine that may play an important role during carcinogenesis and metanephric kidney organogenesis, as BMP a antagonist required for early limb outgrowth and patterning in maintaining the FGF4-SHH feedback loop. Down-regulates the BMP4 signaling in a dose-dependent manner. Antagonist of BMP2; inhibits BMP2-mediated differentiation of osteoblasts (in vitro). Acts as inhibitor of monocyte chemotaxis. This is Gremlin-1 (Grem1) from Mus musculus (Mouse).